Reading from the N-terminus, the 236-residue chain is 2-C-methyl-D-erythritol 4-phosphate cytidylyltransferase (236 aa).

Belongs to the IspD/TarI cytidylyltransferase family. IspD subfamily.

It catalyses the reaction 2-C-methyl-D-erythritol 4-phosphate + CTP + H(+) = 4-CDP-2-C-methyl-D-erythritol + diphosphate. It functions in the pathway isoprenoid biosynthesis; isopentenyl diphosphate biosynthesis via DXP pathway; isopentenyl diphosphate from 1-deoxy-D-xylulose 5-phosphate: step 2/6. Its function is as follows. Catalyzes the formation of 4-diphosphocytidyl-2-C-methyl-D-erythritol from CTP and 2-C-methyl-D-erythritol 4-phosphate (MEP). In Pseudomonas savastanoi pv. phaseolicola (strain 1448A / Race 6) (Pseudomonas syringae pv. phaseolicola (strain 1448A / Race 6)), this protein is 2-C-methyl-D-erythritol 4-phosphate cytidylyltransferase.